A 1084-amino-acid chain; its full sequence is TNF receptor-associated factor family protein DDB_G0272098 (1084 aa).

Residues 19-103 (YYCPDCGELL…KNRYYETKNF (85 aa)) form the LIM zinc-binding domain. 2 TRAF-type zinc fingers span residues 122–190 (KHIK…IDHE) and 191–248 (IHLS…YNMS). Residues 265-321 (IEEQNQDIKELHNFIENHLSKKFIDLDTIVNIQKYLIKNKNQKISQLTEIIKRVDNS) adopt a coiled-coil conformation. Disordered regions lie at residues 348-392 (YKNS…NINE), 490-523 (IRQQQQQQQQQQQQQQQQQQQPPPTPLPPQNTTI), 537-656 (NNNI…KDGL), and 709-897 (SIVE…NDDD). 4 stretches are compositionally biased toward low complexity: residues 349-375 (KNSNSNNNNNNKNTNENENTNENTNEN), 492-509 (QQQQQQQQQQQQQQQQQQ), 537-549 (NNNINENNNNNNK), and 556-570 (ITAATATNNSNTTST). Residues 489–553 (LIRQQQQQQQ…NNNNNKNNDD (65 aa)) adopt a coiled-coil conformation. Residues 571 to 586 (HTILNGTNNEASMTDI) show a composition bias toward polar residues. A compositionally biased stretch (low complexity) spans 587 to 637 (NETTSTTTTAETTEATASESTEESNNTAETTTTTTTTTTTITTAAETVNST). A compositionally biased stretch (basic and acidic residues) spans 644-656 (TSEKVEEKGKDGL). Positions 735–852 (NGNENENENE…NNNNNNNENV (118 aa)) form a coiled coil. Positions 739–757 (NENENENENENENENENEN) are enriched in acidic residues. The segment covering 774–785 (SNINTSNDTEPT) has biased composition (polar residues). Residues 790-799 (EDIKKNKENE) show a composition bias toward basic and acidic residues. Positions 809 to 849 (NNNIKSVEDTNNNNNNNNNNNNNNNNNNNNNNNNNNNNNNN) are enriched in low complexity. 2 stretches are compositionally biased toward basic and acidic residues: residues 853-864 (YDIKKDRNRENV) and 875-892 (ENGKINDNGDVKMGSEDK). In terms of domain architecture, MATH spans 909–1042 (IFRNQILFKD…DNCFIVNLEV (134 aa)). The disordered stretch occupies residues 1056-1084 (LLQKSSPPAATTTTTTSSSSSKTTPKTKR). The segment covering 1059 to 1084 (KSSPPAATTTTTTSSSSSKTTPKTKR) has biased composition (low complexity).

The protein belongs to the TNF receptor-associated factor family.

The protein localises to the cytoplasm. Probable adapter protein and signal transducer that links members of the tumor necrosis factor receptor family to different signaling pathways by association with the receptor cytoplasmic domain and kinases. The sequence is that of TNF receptor-associated factor family protein DDB_G0272098 from Dictyostelium discoideum (Social amoeba).